The sequence spans 304 residues: Putative S-adenosyl-L-methionine-dependent methyltransferase Mjls_1071 (304 aa).

S-adenosyl-L-methionine is bound by residues D130 and 159–160 (DL).

Belongs to the UPF0677 family.

In terms of biological role, exhibits S-adenosyl-L-methionine-dependent methyltransferase activity. In Mycobacterium sp. (strain JLS), this protein is Putative S-adenosyl-L-methionine-dependent methyltransferase Mjls_1071.